We begin with the raw amino-acid sequence, 585 residues long: Glutamate decarboxylase 2 (585 aa).

Positions 1–25 are disordered; the sequence is MASPGSGFWSFGSEDGSGDPENPST. Phosphoserine is present on residues S3, S6, S10, and S13. 2 S-palmitoyl cysteine lipidation sites follow: C30 and C45. 181 to 183 is a substrate binding site; the sequence is QLS. Position 396 is an N6-(pyridoxal phosphate)lysine (K396). Position 558 (R558) interacts with substrate.

Belongs to the group II decarboxylase family. As to quaternary structure, homodimer. It depends on pyridoxal 5'-phosphate as a cofactor. In terms of processing, phosphorylated; which does not affect kinetic parameters or subcellular location. Palmitoylated; which is required for presynaptic clustering.

Its subcellular location is the cytoplasm. It localises to the cytosol. The protein resides in the cytoplasmic vesicle. It is found in the presynaptic cell membrane. The protein localises to the golgi apparatus membrane. The catalysed reaction is L-glutamate + H(+) = 4-aminobutanoate + CO2. In terms of biological role, catalyzes the production of GABA. The sequence is that of Glutamate decarboxylase 2 (GAD2) from Canis lupus familiaris (Dog).